Consider the following 90-residue polypeptide: Small ribosomal subunit protein bS20 (90 aa).

The protein belongs to the bacterial ribosomal protein bS20 family.

Functionally, binds directly to 16S ribosomal RNA. The protein is Small ribosomal subunit protein bS20 of Rickettsia felis (strain ATCC VR-1525 / URRWXCal2) (Rickettsia azadi).